The primary structure comprises 92 residues: DNA-directed RNA polymerase subunit omega (92 aa).

Belongs to the RNA polymerase subunit omega family. The RNAP catalytic core consists of 2 alpha, 1 beta, 1 beta' and 1 omega subunit. When a sigma factor is associated with the core the holoenzyme is formed, which can initiate transcription.

It catalyses the reaction RNA(n) + a ribonucleoside 5'-triphosphate = RNA(n+1) + diphosphate. Its function is as follows. Promotes RNA polymerase assembly. Latches the N- and C-terminal regions of the beta' subunit thereby facilitating its interaction with the beta and alpha subunits. This Shewanella sp. (strain ANA-3) protein is DNA-directed RNA polymerase subunit omega.